The primary structure comprises 590 residues: Transcription factor bHLH13 (590 aa).

Disordered regions lie at residues L274–F296 and A385–R439. Over residues Q281 to H293 the composition is skewed to low complexity. Residues R416–A425 show a composition bias toward basic residues. The region spanning A429–L478 is the bHLH domain.

As to quaternary structure, homodimer.

Its subcellular location is the nucleus. The chain is Transcription factor bHLH13 (BHLH13) from Arabidopsis thaliana (Mouse-ear cress).